A 226-amino-acid chain; its full sequence is RING-H2 finger protein ATL75 (226 aa).

The helical transmembrane segment at 60–80 (LMLLSVLICGIICCLGLHYII) threads the bilayer. The RING-type; atypical zinc-finger motif lies at 136 to 178 (CVICLSDFVSGEQIRMLPKCHHGFHVRCIDKWLQQHLTCPKCR).

The protein belongs to the RING-type zinc finger family. ATL subfamily.

It localises to the membrane. It catalyses the reaction S-ubiquitinyl-[E2 ubiquitin-conjugating enzyme]-L-cysteine + [acceptor protein]-L-lysine = [E2 ubiquitin-conjugating enzyme]-L-cysteine + N(6)-ubiquitinyl-[acceptor protein]-L-lysine.. It functions in the pathway protein modification; protein ubiquitination. The sequence is that of RING-H2 finger protein ATL75 (ATL75) from Arabidopsis thaliana (Mouse-ear cress).